A 57-amino-acid polypeptide reads, in one-letter code: Large ribosomal subunit protein bL33 (57 aa).

Belongs to the bacterial ribosomal protein bL33 family.

This is Large ribosomal subunit protein bL33 from Shewanella sp. (strain MR-4).